We begin with the raw amino-acid sequence, 725 residues long: MPPTVIAEPVASGAHASYSGGPGETDYHALNAMLNLYDADGKIQFDKDREAAHQYFLQHVNQNTVFFHNQDEKLDYLIRENYYEREVLDQYSRNFVKTLLDRAYAKKFRFPTFLGAFKYYTSYTLKTFDGKRYLERFEDRVVMVALTLAAGDTALAELLVDEIIDGRFQPATPTFLNSGKKQRGEPVSCFLLRVEDNMESIGRSINSALQLSKRGGGVALLLTNIREHGAPIKNIENQSSGVIPIMKLLEDAFSYANQLGARQGAGAVYLHAHHPDIYRFLDTKRENADEKIRIKTLSLGVVIPDITFELAKRNDDMYLFSPYDVERVYGVPFADISVTEKYYEMVDDARIRKTKIKAREFFQTLAELQFESGYPYIMFEDTVNRANPIDGKITHSNLCSEILQVSTPSLFNEDLSYAKVGKDISCNLGSLNIAKTMDSPDFAQTIEVAIRALTAVSDQTHIKSVPSIEQGNNDSHAIGLGQMNLHGYLARERIFYGSDEGIDFTNIYFYTVLYHALRASNRIAIERGTHFKGFERSKYASGEFFDKYTDQIWEPKTQKVRQLFADAGIRIPTQDDWRRLKESVQAHGIYNQNLQAVPPTGSISYINHSTSSIHPIVSKVEIRKEGKIGRVYYPAPYMTNDNLEYYEDAYEIGYEKIIDTYAAATQHVDQGLSLTLFFKDTATTRDVNKAQIYAWRKGIKTLYYIRLRQMALEGTEVEGCVSCML.

Substrate contacts are provided by residues Thr-172, 188–189, Gly-217, 397–401, and 599–603; these read SC, NLCSE, and PTGSI. Cys-189 and Cys-426 are oxidised to a cystine. The Proton acceptor role is filled by Asn-397. Cys-399 acts as the Cysteine radical intermediate in catalysis. Catalysis depends on Glu-401, which acts as the Proton acceptor.

It belongs to the ribonucleoside diphosphate reductase large chain family. As to quaternary structure, tetramer of two alpha and two beta subunits. Co-immunoprecipitates with DarG in the presence and absence of darT.

It carries out the reaction a 2'-deoxyribonucleoside 5'-diphosphate + [thioredoxin]-disulfide + H2O = a ribonucleoside 5'-diphosphate + [thioredoxin]-dithiol. Under complex allosteric control mediated by deoxynucleoside triphosphates and ATP binding. The type of nucleotide bound at the specificity site determines substrate preference. It seems probable that ATP makes the enzyme reduce CDP and UDP, dGTP favors ADP reduction and dTTP favors GDP reduction. CDP reduction is stimulated by dATP. Functionally, provides the precursors necessary for DNA synthesis. Catalyzes the biosynthesis of deoxyribonucleotides from the corresponding ribonucleotides. When coexpressed in E.coli with nrdF2 the 2 proteins complement a temperature-sensitive E.coli mutant, however coexpression with nrdF1 does not complement. The sequence is that of Ribonucleoside-diphosphate reductase subunit alpha (nrdE) from Mycobacterium tuberculosis (strain ATCC 25618 / H37Rv).